The sequence spans 572 residues: Probable D-xylulose kinase A (572 aa).

Positions 95, 166, 282, and 283 each coordinate substrate. ATP contacts are provided by residues tryptophan 365, 470 to 471 (GG), and asparagine 474.

Belongs to the FGGY kinase family.

The protein resides in the cytoplasm. It catalyses the reaction D-xylulose + ATP = D-xylulose 5-phosphate + ADP + H(+). In terms of biological role, highly specific D-xylulose kinase which participates in the catabolism of xylose. Xylose is a major component of hemicelluloses such as xylan. Most fungi utilize D-xylose via three enzymatic reactions, xylose reductase (XR), xylitol dehydrogenase (XDH), and xylulokinase, to form xylulose 5-phosphate, which enters pentose phosphate pathway. The polypeptide is Probable D-xylulose kinase A (xkiA) (Aspergillus flavus (strain ATCC 200026 / FGSC A1120 / IAM 13836 / NRRL 3357 / JCM 12722 / SRRC 167)).